Reading from the N-terminus, the 99-residue chain is Integration host factor subunit alpha (99 aa).

Belongs to the bacterial histone-like protein family. In terms of assembly, heterodimer of an alpha and a beta chain.

In terms of biological role, this protein is one of the two subunits of integration host factor, a specific DNA-binding protein that functions in genetic recombination as well as in transcriptional and translational control. This is Integration host factor subunit alpha from Xylella fastidiosa (strain M12).